A 251-amino-acid chain; its full sequence is uncharacterized protein (251 aa).

A divalent metal cation contacts are provided by histidine 6, histidine 8, glutamate 90, histidine 130, histidine 154, and aspartate 202.

It belongs to the metallo-dependent hydrolases superfamily. TatD-type hydrolase family. The cofactor is a divalent metal cation.

This is an uncharacterized protein from Haemophilus influenzae (strain ATCC 51907 / DSM 11121 / KW20 / Rd).